Consider the following 494-residue polypeptide: Flavin-containing monooxygenase ustF2 (494 aa).

An N-terminal signal peptide occupies residues 1–21 (MANPQTTRVAVVGAGISGVLA). Residue 13-18 (GAGISG) coordinates FAD. The disordered stretch occupies residues 73-93 (EPSYPAMKPSKADPPATNEQE). Position 250-255 (250-255 (GGGVSS)) interacts with NADP(+). A glycan (N-linked (GlcNAc...) asparagine) is linked at N459.

Belongs to the FMO family.

Its pathway is mycotoxin biosynthesis. In terms of biological role, flavin-containing monooxygenase; part of the gene cluster that mediates the biosynthesis of the secondary metabolite ustiloxin B, an antimitotic tetrapeptide. First, ustA is processed by the subtilisin-like endoprotease Kex2 that is outside the ustiloxin B gene cluster, at the C-terminal side of Arg-Lys, after transfer to Golgi apparatus through the endoplasmic reticulum (ER). Cleavage by KEX2 generates 16 peptides YAIG-I to YAIG-XVI. To process the precursor peptide further, at least two peptidases are necessary to cleave the N-terminal and C-terminal sides of the Tyr-Ala-Ile-Gly core peptide which serves as backbone for the synthesis of ustiloxin B, through cyclization and modification of the tyrosine with a non-protein coding amino acid, norvaline. One of the two peptidases must be the serine peptidase ustP; and the other pepdidase is probably ustH. Macrocyclization of the core peptide derived from ustA requires the tyrosinase ustQ, as well as the homologous oxidases ustYa and ustYb, and leads to the production of the first cyclization product N-desmethylustiloxin F. For the formation of N-desmethylustiloxin F, three oxidation steps are required, hydroxylation at the benzylic position, hydroxylation at either the aromatic ring of Tyr or beta-position of Ile, and oxidative cyclization. UstQ may catalyze the oxidation of a phenol moiety, whereas the ustYa and ustYb are most likely responsible for the remaining two-step oxidations. N-desmethylustiloxin F is then methylated by ustM to yield ustiloxin F which in turn substrate of the cytochrome P450 monooxygenase ustC which catalyzes the formation of S-deoxyustiloxin H. The flavoprotein monooxygenases ustF1 and ustF2 then participate in the modification of the side chain of S-deoxyustiloxin H, leading to the synthesis of an oxime intermediate, via ustiloxin H. Finally, carboxylative dehydration performed by the cysteine desulfurase-like protein ustD yields ustiloxin B. The polypeptide is Flavin-containing monooxygenase ustF2 (Aspergillus flavus (strain ATCC 200026 / FGSC A1120 / IAM 13836 / NRRL 3357 / JCM 12722 / SRRC 167)).